The chain runs to 421 residues: uncharacterized protein (421 aa).

Residue K249 is modified to N6-(pyridoxal phosphate)lysine.

It belongs to the class-I pyridoxal-phosphate-dependent aminotransferase family. The cofactor is pyridoxal 5'-phosphate.

It localises to the cytoplasm. This is an uncharacterized protein from Schizosaccharomyces pombe (strain 972 / ATCC 24843) (Fission yeast).